The primary structure comprises 147 residues: D-aminoacyl-tRNA deacylase (147 aa).

The Gly-cisPro motif, important for rejection of L-amino acids signature appears at 137 to 138; sequence GP.

The protein belongs to the DTD family. As to quaternary structure, homodimer.

It localises to the cytoplasm. The catalysed reaction is glycyl-tRNA(Ala) + H2O = tRNA(Ala) + glycine + H(+). It catalyses the reaction a D-aminoacyl-tRNA + H2O = a tRNA + a D-alpha-amino acid + H(+). In terms of biological role, an aminoacyl-tRNA editing enzyme that deacylates mischarged D-aminoacyl-tRNAs. Also deacylates mischarged glycyl-tRNA(Ala), protecting cells against glycine mischarging by AlaRS. Acts via tRNA-based rather than protein-based catalysis; rejects L-amino acids rather than detecting D-amino acids in the active site. By recycling D-aminoacyl-tRNA to D-amino acids and free tRNA molecules, this enzyme counteracts the toxicity associated with the formation of D-aminoacyl-tRNA entities in vivo and helps enforce protein L-homochirality. This Bacillus licheniformis (strain ATCC 14580 / DSM 13 / JCM 2505 / CCUG 7422 / NBRC 12200 / NCIMB 9375 / NCTC 10341 / NRRL NRS-1264 / Gibson 46) protein is D-aminoacyl-tRNA deacylase.